We begin with the raw amino-acid sequence, 229 residues long: Small ribosomal subunit protein uS3 (229 aa).

One can recognise a KH type-2 domain in the interval 39–107 (IRKFLKKELY…EVFINIKEEK (69 aa)).

The protein belongs to the universal ribosomal protein uS3 family. Part of the 30S ribosomal subunit. Forms a tight complex with proteins S10 and S14.

In terms of biological role, binds the lower part of the 30S subunit head. Binds mRNA in the 70S ribosome, positioning it for translation. This is Small ribosomal subunit protein uS3 from Nitratiruptor sp. (strain SB155-2).